We begin with the raw amino-acid sequence, 202 residues long: Small ribosomal subunit protein uS4c (202 aa).

Positions 90-152 constitute an S4 RNA-binding domain; sequence MRLDNLIFRL…AASKSLVNTY (63 aa).

The protein belongs to the universal ribosomal protein uS4 family. As to quaternary structure, part of the 30S ribosomal subunit. Contacts protein S5. The interaction surface between S4 and S5 is involved in control of translational fidelity.

It is found in the plastid. Its subcellular location is the chloroplast. Functionally, one of the primary rRNA binding proteins, it binds directly to 16S rRNA where it nucleates assembly of the body of the 30S subunit. Its function is as follows. With S5 and S12 plays an important role in translational accuracy. The chain is Small ribosomal subunit protein uS4c (rps4) from Emiliania huxleyi (Coccolithophore).